The chain runs to 57 residues: Small ribosomal subunit protein bS21 (57 aa).

It belongs to the bacterial ribosomal protein bS21 family.

The protein is Small ribosomal subunit protein bS21 of Bacillus pumilus (strain SAFR-032).